Here is a 113-residue protein sequence, read N- to C-terminus: Protein translation factor SUI1 homolog 1 (113 aa).

Residues methionine 1–glycine 24 are disordered. At serine 2 the chain carries N-acetylserine.

It belongs to the SUI1 family.

Functionally, probably involved in translation. The protein is Protein translation factor SUI1 homolog 1 of Arabidopsis thaliana (Mouse-ear cress).